Reading from the N-terminus, the 444-residue chain is Aspartate--tRNA(Asp/Asn) ligase (444 aa).

L-aspartate is bound at residue glutamate 176. The interval 198 to 201 (QLFK) is aspartate. Position 220 (arginine 220) interacts with L-aspartate. ATP contacts are provided by residues 220-222 (RAE), 228-230 (RHL), and glutamate 367. 2 residues coordinate Mg(2+): glutamate 367 and serine 370. L-aspartate-binding residues include serine 370 and arginine 374. ATP is bound at residue 415 to 418 (GCER).

It belongs to the class-II aminoacyl-tRNA synthetase family. Type 2 subfamily. Homodimer. It depends on Mg(2+) as a cofactor.

The protein localises to the cytoplasm. It carries out the reaction tRNA(Asx) + L-aspartate + ATP = L-aspartyl-tRNA(Asx) + AMP + diphosphate. Its function is as follows. Aspartyl-tRNA synthetase with relaxed tRNA specificity since it is able to aspartylate not only its cognate tRNA(Asp) but also tRNA(Asn). Reaction proceeds in two steps: L-aspartate is first activated by ATP to form Asp-AMP and then transferred to the acceptor end of tRNA(Asp/Asn). This chain is Aspartate--tRNA(Asp/Asn) ligase, found in Methanosarcina acetivorans (strain ATCC 35395 / DSM 2834 / JCM 12185 / C2A).